The primary structure comprises 513 residues: ATP synthase subunit alpha (513 aa).

169-176 (GDRQTGKT) contacts ATP.

Belongs to the ATPase alpha/beta chains family. In terms of assembly, F-type ATPases have 2 components, CF(1) - the catalytic core - and CF(0) - the membrane proton channel. CF(1) has five subunits: alpha(3), beta(3), gamma(1), delta(1), epsilon(1). CF(0) has three main subunits: a(1), b(2) and c(9-12). The alpha and beta chains form an alternating ring which encloses part of the gamma chain. CF(1) is attached to CF(0) by a central stalk formed by the gamma and epsilon chains, while a peripheral stalk is formed by the delta and b chains.

The protein resides in the cell inner membrane. It carries out the reaction ATP + H2O + 4 H(+)(in) = ADP + phosphate + 5 H(+)(out). Functionally, produces ATP from ADP in the presence of a proton gradient across the membrane. The alpha chain is a regulatory subunit. This is ATP synthase subunit alpha from Salmonella arizonae (strain ATCC BAA-731 / CDC346-86 / RSK2980).